The sequence spans 328 residues: Coiled-coil domain-containing protein 54 (328 aa).

A coiled-coil region spans residues 93–148 (KIQEKTDFFQKQMQVLETKMNVNENKQCATAEDIFSVKEDVDALKKKVTELGNQNS). Threonine 182 is modified (phosphothreonine).

The polypeptide is Coiled-coil domain-containing protein 54 (CCDC54) (Bos taurus (Bovine)).